The primary structure comprises 967 residues: Leucine--tRNA ligase (967 aa).

Residues 43–53 (PYLSGHLHVGH) carry the 'HIGH' region motif. A 'KMSKS' region motif is present at residues 650 to 654 (KMSKS). Lys653 contributes to the ATP binding site.

Belongs to the class-I aminoacyl-tRNA synthetase family.

It is found in the cytoplasm. It carries out the reaction tRNA(Leu) + L-leucine + ATP = L-leucyl-tRNA(Leu) + AMP + diphosphate. This Thermococcus onnurineus (strain NA1) protein is Leucine--tRNA ligase.